Here is a 564-residue protein sequence, read N- to C-terminus: Alpha-farnesene synthase (564 aa).

4 residues coordinate Mg(2+): Asp-313, Asp-317, Thr-464, and Glu-468. Positions 313 to 317 (DDVYD) match the DDXXD motif motif.

This sequence belongs to the terpene synthase family. The cofactor is Mg(2+).

The enzyme catalyses (2E,6E)-farnesyl diphosphate = (3E,6E)-alpha-farnesene + diphosphate. Catalyzes the cyclization of farnesyl diphosphate to (E,E)-alpha-farnesene. This chain is Alpha-farnesene synthase (TPS7), found in Ricinus communis (Castor bean).